Reading from the N-terminus, the 148-residue chain is MALYEHVLLARQDISQQQVDALVEQFKGVLEANGGKFGKVENWGLRPLTYRIKKNRKAYYTLVNIDAPAAAVAEMERQMRINEDVLRFLTVRVEEHEEGQSAMLTRRDDRRERDGDDRPRRREGGFDRGDRGDRGPRRPRDNEAGEGA.

The interval 96 to 148 is disordered; the sequence is HEEGQSAMLTRRDDRRERDGDDRPRRREGGFDRGDRGDRGPRRPRDNEAGEGA.

This sequence belongs to the bacterial ribosomal protein bS6 family.

In terms of biological role, binds together with bS18 to 16S ribosomal RNA. The chain is Small ribosomal subunit protein bS6 from Brucella abortus biovar 1 (strain 9-941).